The following is a 74-amino-acid chain: Acyl carrier protein (74 aa).

The Carrier domain maps to 1–74 (MFEKVRKIIA…DVVEYIKNNS (74 aa)). At S34 the chain carries O-(pantetheine 4'-phosphoryl)serine.

It belongs to the acyl carrier protein (ACP) family. In terms of processing, 4'-phosphopantetheine is transferred from CoA to a specific serine of apo-ACP by AcpS. This modification is essential for activity because fatty acids are bound in thioester linkage to the sulfhydryl of the prosthetic group.

It is found in the cytoplasm. The protein operates within lipid metabolism; fatty acid biosynthesis. Its function is as follows. Carrier of the growing fatty acid chain in fatty acid biosynthesis. This chain is Acyl carrier protein, found in Acetivibrio thermocellus (strain ATCC 27405 / DSM 1237 / JCM 9322 / NBRC 103400 / NCIMB 10682 / NRRL B-4536 / VPI 7372) (Clostridium thermocellum).